The chain runs to 194 residues: Adenylate kinase (194 aa).

8–16 (GIPGVGKTT) lines the ATP pocket.

This sequence belongs to the archaeal adenylate kinase family.

It localises to the cytoplasm. It catalyses the reaction AMP + ATP = 2 ADP. The sequence is that of Adenylate kinase (adkA) from Sulfurisphaera tokodaii (strain DSM 16993 / JCM 10545 / NBRC 100140 / 7) (Sulfolobus tokodaii).